Consider the following 252-residue polypeptide: Putative teichuronic acid biosynthesis glycosyltransferase TuaG (252 aa).

Belongs to the glycosyltransferase 2 family.

The protein operates within cell wall biogenesis; teichuronic acid biosynthesis. This is Putative teichuronic acid biosynthesis glycosyltransferase TuaG (tuaG) from Bacillus subtilis (strain 168).